A 110-amino-acid polypeptide reads, in one-letter code: UPF0122 protein LMOf2365_1829 (110 aa).

Belongs to the UPF0122 family.

Might take part in the signal recognition particle (SRP) pathway. This is inferred from the conservation of its genetic proximity to ftsY/ffh. May be a regulatory protein. The chain is UPF0122 protein LMOf2365_1829 from Listeria monocytogenes serotype 4b (strain F2365).